A 776-amino-acid polypeptide reads, in one-letter code: MSFASNATGFRIPLTTCVYPSPILRFNAKVGSGSSYGTTEAQRNMKCVDGIGRSRVVAVAASGRTRDSNPEVESEKMKEMIRWMFRDMDDGEVSVSAYDTAWVALVEDIGGSGGPQFPTSLDWISDNQLDDGSWGDRKFVLYDRILNTLACVVALTTWKLHPHKCEKGLKFIRENIEKLDNEDEELMLVGFEVALPSLIDLAKKLGIEISDDSPCIKNIYAKRDSKLKEIPMDLLHKEPTSLLFSLEGMEGLDWEKLLTLRSEGSFLSSPSSTAYALQHTKDELCLDYLLKPVNKFNGGVPSTYPVDMFEHLWAVDRLQRLGISRYFQVEIGECLDYTFRYWTNEGISWARYTNIKDSDDTSMGFRLLRLHGYDISIDAFKAFEKGGEFWCMAGQMGHAVTGVYNLYRASQLMFPQEHILLDARNFSANFLHHKRLTNAIVDKWIISKDLPAEVGYALDVPFYASLPRLEARFFLEQYGGDDDVWIGKTLYRMLYVNSNTYLELAKLDYKHCQSVHQLEWKSMQKWYTDCNLGEFGLSEISLLLAYYIAASTAFEPEKSGERLPWATTIILVETIASQQLSNEQKREFVNEFENGSTINNRNGGRYKPRSRLVDVLINAITLVAQGRGISQQLSNAWQKWLKTWEGGGHQGEAEARLLIHTLHLSSGLDESSFSHPKYQQLLEVTSKVCHQLRLFQNRKVYDAQGCTSRLVTGTTFQTEAGMQELVKLVFPKTSDDMTSATKQSFFNIARSFYYTAYCHEGAIDSHIDKVLFEKIV.

The transit peptide at 1 to 60 directs the protein to the chloroplast; it reads MSFASNATGFRIPLTTCVYPSPILRFNAKVGSGSSYGTTEAQRNMKCVDGIGRSRVVAVA. A substrate-binding site is contributed by Lys-226. Asp-357 and Asp-359 together coordinate Mg(2+). The DXDD motif signature appears at 357–360; that stretch reads DSDD. Substrate is bound at residue Lys-443.

The protein belongs to the terpene synthase family. It depends on Mg(2+) as a cofactor.

It localises to the plastid. The protein resides in the chloroplast. It catalyses the reaction ent-8alpha-hydroxylabd-13-en-15-yl diphosphate = (2E,6E,10E)-geranylgeranyl diphosphate + H2O. It functions in the pathway secondary metabolite biosynthesis; terpenoid biosynthesis. Functionally, involved in diterpenoid biosynthesis. Catalyzes the conversion of all-trans-geranylgeranyl diphosphate to ent-8alpha-hydroxylabd-13-en-15-yl diphosphate. This Salvia miltiorrhiza (Chinese sage) protein is Ent-8-alpha-hydroxylabd-13-en-15-yl diphosphate synthase CPS4, chloroplastic.